The sequence spans 151 residues: uncharacterized protein (151 aa).

The stretch at G35 to D147 forms a coiled coil.

This is an uncharacterized protein from Helicobacter hepaticus (strain ATCC 51449 / 3B1).